A 952-amino-acid chain; its full sequence is Eukaryotic initiation factor 4F subunit p150 (952 aa).

Disordered stretches follow at residues 1-77 (MTDE…NYNG), 115-389 (GSAP…DAGT), and 481-575 (VIPP…LVPS). Positions 7 to 16 (HPTQSASKQE) are enriched in polar residues. A compositionally biased stretch (low complexity) spans 29–46 (ESQQQRGYTNYNNGSNYT). Residues 47-56 (QKKPYNSNRP) show a composition bias toward polar residues. Residues 65–74 (GPNRYNNRGN) are compositionally biased toward low complexity. A compositionally biased stretch (basic and acidic residues) spans 140-151 (SGEHLDLKEQHK). Residues 154-166 (LQSQERSTVSPQP) show a composition bias toward polar residues. Position 163 is a phosphoserine (S163). Residues 175–191 (DSTSTSTPTPTPSTNDS) show a composition bias toward low complexity. Phosphothreonine is present on T181. Residues 188 to 299 (TNDSKASSEE…KEESTPKVLT (112 aa)) form an interaction with PAB1 region. S195 bears the Phosphoserine mark. Residues 218–228 (AALEKKRKEQL) show a composition bias toward basic and acidic residues. Positions 229–244 (EGSSGNNNIPMKTTPE) are enriched in polar residues. Basic and acidic residues-rich tracts occupy residues 246–276 (VEEK…KQET), 283–294 (QGEKGQIKEEST), and 309–333 (QQKE…ETKS). Over residues 355-368 (TEQSNIDESATTPA) the composition is skewed to polar residues. S503 carries the post-translational modification Phosphoserine. 2 stretches are compositionally biased toward basic and acidic residues: residues 504–521 (RGHD…DRAN) and 532–569 (RMND…KEEV). One can recognise an MIF4G domain in the interval 607–850 (ERKMKSLLNK…IDIKELRHDK (244 aa)). Residues 870-952 (EEERQRQLKN…ALMGESDDEE (83 aa)) form a disordered region. Residues 879 to 894 (NNSRSNSRRTNNSSNR) are compositionally biased toward low complexity. S883 is subject to Phosphoserine. T888 carries the post-translational modification Phosphothreonine. Phosphoserine occurs at positions 892, 896, 908, and 948. Over residues 908 to 922 (SFITTRTYSQRNSQR) the composition is skewed to polar residues.

The protein belongs to the eukaryotic initiation factor 4G family. As to quaternary structure, component of the eIF4F complex, which composition varies with external and internal environmental conditions. It is composed of at least eIF4A (TIF1/TIF2), eIF4E (TIF45) and eIF4G (TIF4631 or TIF4632). Interacts with PAT1 in a RNA-dependent manner.

It is found in the cytoplasm. The protein localises to the P-body. It localises to the stress granule. Component of the eIF4F complex, which interacts with the mRNA cap structure and serves as an initial point of assembly for the translation apparatus. Stimulates translation by interaction with polyadenylate-binding protein PAB1, bringing the 5'- and 3'-ends of the mRNA in proximity. The formation of this circular mRNP structure appears to be critical for the synergistic effects of the cap and the poly(A) tail in facilitating translation initiation, recycling of ribosomes, and mRNA stability. TIF4631 is probably essential when TIF4632 is missing. This Saccharomyces cerevisiae (strain ATCC 204508 / S288c) (Baker's yeast) protein is Eukaryotic initiation factor 4F subunit p150.